Consider the following 728-residue polypeptide: Homoaconitase, mitochondrial (728 aa).

The transit peptide at Met1 to Tyr24 directs the protein to the mitochondrion. The [4Fe-4S] cluster site is built by Cys362, Cys422, and Cys425.

The protein belongs to the aconitase/IPM isomerase family. Requires [4Fe-4S] cluster as cofactor.

It localises to the mitochondrion. It catalyses the reaction (2R,3S)-homoisocitrate = cis-homoaconitate + H2O. It functions in the pathway amino-acid biosynthesis; L-lysine biosynthesis via AAA pathway; L-alpha-aminoadipate from 2-oxoglutarate: step 3/5. In terms of biological role, catalyzes the reversible hydration of cis-homoaconitate to (2R,3S)-homoisocitrate, a step in the alpha-aminoadipate pathway for lysine biosynthesis. The polypeptide is Homoaconitase, mitochondrial (LYS4) (Cryptococcus neoformans var. neoformans serotype D (strain JEC21 / ATCC MYA-565) (Filobasidiella neoformans)).